We begin with the raw amino-acid sequence, 218 residues long: Elongation factor Ts (218 aa).

Positions 82-85 are involved in Mg(2+) ion dislocation from EF-Tu; that stretch reads TDFV.

Belongs to the EF-Ts family.

The protein resides in the cytoplasm. In terms of biological role, associates with the EF-Tu.GDP complex and induces the exchange of GDP to GTP. It remains bound to the aminoacyl-tRNA.EF-Tu.GTP complex up to the GTP hydrolysis stage on the ribosome. This chain is Elongation factor Ts, found in Picosynechococcus sp. (strain ATCC 27264 / PCC 7002 / PR-6) (Agmenellum quadruplicatum).